The sequence spans 600 residues: Baculoviral IAP repeat-containing protein 3 (600 aa).

The stretch at 27-94 (ELYRLSTYSA…RKLYPSCNFV (68 aa)) is one BIR 1 repeat. Ser-138 is subject to Phosphoserine. BIR repeat units lie at residues 167–233 (EKAR…CPFL) and 253–320 (HAAR…CEYL). Residues Cys-290, Cys-293, His-310, and Cys-317 each contribute to the Zn(2+) site. The CARD domain occupies 436–525 (EESDDLALIR…ALYRDIFVQQ (90 aa)). The RING-type zinc-finger motif lies at 553-588 (CKVCMDREVSIVFIPCGHLVVCKDCAPSLRKCPICR).

It belongs to the IAP family. As to quaternary structure, interacts with PRSS25; the interaction inhibits apoptotic suppressor activity. The BIR motifs region interacts with TNF receptor associated factors 1 and 2 (TRAF1 and TRAF2) to form a heteromeric complex, which is then recruited to the tumor necrosis factor receptor 2 (TNFR2). Interaction with TRAF2 is required for ubiquitination of IKBKE, degradation of NFKBIA and activation of NF-kappa-B. Interacts with RIP1, RIP2, RIP3, RIP4 and USP19. Auto-ubiquitinated and degraded by the proteasome in apoptotic cells.

It localises to the cytoplasm. It is found in the nucleus. It catalyses the reaction S-ubiquitinyl-[E2 ubiquitin-conjugating enzyme]-L-cysteine + [acceptor protein]-L-lysine = [E2 ubiquitin-conjugating enzyme]-L-cysteine + N(6)-ubiquitinyl-[acceptor protein]-L-lysine.. Its activity is regulated as follows. USP19 regulates the stability of BIRC3/c-IAP2 by preventing its ubiquitination. Its function is as follows. Multi-functional protein which regulates not only caspases and apoptosis, but also modulates inflammatory signaling and immunity, mitogenic kinase signaling and cell proliferation, as well as cell invasion and metastasis. Acts as an E3 ubiquitin-protein ligase regulating NF-kappa-B signaling and regulates both canonical and non-canonical NF-kappa-B signaling by acting in opposite directions: acts as a positive regulator of the canonical pathway and suppresses constitutive activation of non-canonical NF-kappa-B signaling. The target proteins for its E3 ubiquitin-protein ligase activity include: RIPK1, RIPK2, RIPK3, RIPK4, CASP3, CASP7, CASP8, IKBKE, TRAF1, and BCL10. Acts as an important regulator of innate immune signaling via regulation of Toll-like receptors (TLRs), Nodlike receptors (NLRs) and RIG-I like receptors (RLRs), collectively referred to as pattern recognition receptors (PRRs). Protects cells from spontaneous formation of the ripoptosome, a large multi-protein complex that has the capability to kill cancer cells in a caspase-dependent and caspase-independent manner. Suppresses ripoptosome formation by ubiquitinating RIPK1 and CASP8. The chain is Baculoviral IAP repeat-containing protein 3 (Birc3) from Mus musculus (Mouse).